Reading from the N-terminus, the 166-residue chain is Phosphopantetheine adenylyltransferase (166 aa).

Residue Ser-9 coordinates substrate. ATP contacts are provided by residues 9-10 (SF) and His-17. Residues Lys-41, Thr-74, and Arg-88 each coordinate substrate. ATP-binding positions include 89-91 (GLR), Glu-99, and 124-130 (DSFISSS).

It belongs to the bacterial CoaD family. In terms of assembly, homohexamer. It depends on Mg(2+) as a cofactor.

Its subcellular location is the cytoplasm. The enzyme catalyses (R)-4'-phosphopantetheine + ATP + H(+) = 3'-dephospho-CoA + diphosphate. It functions in the pathway cofactor biosynthesis; coenzyme A biosynthesis; CoA from (R)-pantothenate: step 4/5. Reversibly transfers an adenylyl group from ATP to 4'-phosphopantetheine, yielding dephospho-CoA (dPCoA) and pyrophosphate. The protein is Phosphopantetheine adenylyltransferase of Lactobacillus gasseri (strain ATCC 33323 / DSM 20243 / BCRC 14619 / CIP 102991 / JCM 1131 / KCTC 3163 / NCIMB 11718 / NCTC 13722 / AM63).